Consider the following 96-residue polypeptide: Small ribosomal subunit protein bS6 (96 aa).

This sequence belongs to the bacterial ribosomal protein bS6 family.

In terms of biological role, binds together with bS18 to 16S ribosomal RNA. This chain is Small ribosomal subunit protein bS6, found in Nocardioides sp. (strain ATCC BAA-499 / JS614).